Consider the following 235-residue polypeptide: Small ribosomal subunit protein uS3 (235 aa).

The 69-residue stretch at 39–107 (VRKFLNKELM…PAQINIAEVK (69 aa)) folds into the KH type-2 domain.

It belongs to the universal ribosomal protein uS3 family. Part of the 30S ribosomal subunit. Forms a tight complex with proteins S10 and S14.

In terms of biological role, binds the lower part of the 30S subunit head. Binds mRNA in the 70S ribosome, positioning it for translation. The protein is Small ribosomal subunit protein uS3 of Actinobacillus succinogenes (strain ATCC 55618 / DSM 22257 / CCUG 43843 / 130Z).